The following is a 489-amino-acid chain: Rhamnulokinase (489 aa).

13–17 contributes to the ATP binding site; that stretch reads ASSGR. The cysteines at positions 68 and 222 are disulfide-linked. Substrate-binding positions include glycine 83 and 236-238; that span reads HDT. Aspartate 237 serves as the catalytic Proton acceptor. ATP is bound at residue threonine 259. Asparagine 296 is a binding site for substrate. Glutamine 304 contacts ATP. Cysteine 353 and cysteine 370 form a disulfide bridge. Glycine 402 lines the ATP pocket. Cysteine 413 and cysteine 417 are oxidised to a cystine.

The protein belongs to the rhamnulokinase family. Requires Mg(2+) as cofactor.

The enzyme catalyses L-rhamnulose + ATP = L-rhamnulose 1-phosphate + ADP + H(+). Its pathway is carbohydrate degradation; L-rhamnose degradation; glycerone phosphate from L-rhamnose: step 2/3. Its function is as follows. Involved in the catabolism of L-rhamnose (6-deoxy-L-mannose). Catalyzes the transfer of the gamma-phosphate group from ATP to the 1-hydroxyl group of L-rhamnulose to yield L-rhamnulose 1-phosphate. This is Rhamnulokinase from Salmonella schwarzengrund (strain CVM19633).